Consider the following 255-residue polypeptide: Hydroxyacylglutathione hydrolase (255 aa).

7 residues coordinate Zn(2+): H55, H57, D59, H60, H113, D132, and H170.

This sequence belongs to the metallo-beta-lactamase superfamily. Glyoxalase II family. In terms of assembly, monomer. The cofactor is Zn(2+).

The catalysed reaction is an S-(2-hydroxyacyl)glutathione + H2O = a 2-hydroxy carboxylate + glutathione + H(+). The protein operates within secondary metabolite metabolism; methylglyoxal degradation; (R)-lactate from methylglyoxal: step 2/2. Its function is as follows. Thiolesterase that catalyzes the hydrolysis of S-D-lactoyl-glutathione to form glutathione and D-lactic acid. This chain is Hydroxyacylglutathione hydrolase, found in Methylobacterium sp. (strain 4-46).